A 241-amino-acid polypeptide reads, in one-letter code: Triosephosphate isomerase (241 aa).

N9–K11 contributes to the substrate binding site. Catalysis depends on H96, which acts as the Electrophile. The active-site Proton acceptor is E165. Residues G171, S204, and G225–G226 each bind substrate.

The protein belongs to the triosephosphate isomerase family. In terms of assembly, homodimer.

The protein resides in the cytoplasm. The catalysed reaction is D-glyceraldehyde 3-phosphate = dihydroxyacetone phosphate. It functions in the pathway carbohydrate biosynthesis; gluconeogenesis. The protein operates within carbohydrate degradation; glycolysis; D-glyceraldehyde 3-phosphate from glycerone phosphate: step 1/1. Involved in the gluconeogenesis. Catalyzes stereospecifically the conversion of dihydroxyacetone phosphate (DHAP) to D-glyceraldehyde-3-phosphate (G3P). This chain is Triosephosphate isomerase, found in Nostoc sp. (strain PCC 7120 / SAG 25.82 / UTEX 2576).